The chain runs to 134 residues: MIMPQTRLDVADNSGARELMCIRVLNSGIGGKGLTKGGGGNKRYAHVGDIIVASVKDAAPRGAVKAGDVVKAVVVRTSHAIKRADGSTIRFDKNAAVIINNQGEPRGTRVFGPVARELRDRRFMKIVSLAPEVL.

The protein belongs to the universal ribosomal protein uL14 family. Part of the 50S ribosomal subunit. Forms a cluster with proteins L3 and L19. In the 70S ribosome, L14 and L19 interact and together make contacts with the 16S rRNA in bridges B5 and B8.

Its function is as follows. Binds to 23S rRNA. Forms part of two intersubunit bridges in the 70S ribosome. The protein is Large ribosomal subunit protein uL14 of Deinococcus geothermalis (strain DSM 11300 / CIP 105573 / AG-3a).